Reading from the N-terminus, the 379-residue chain is Succinyl-diaminopimelate desuccinylase (379 aa).

His-70 is a Zn(2+) binding site. Asp-72 is an active-site residue. Residue Asp-103 coordinates Zn(2+). Glu-137 functions as the Proton acceptor in the catalytic mechanism. Glu-138, Glu-166, and His-352 together coordinate Zn(2+).

This sequence belongs to the peptidase M20A family. DapE subfamily. Homodimer. Zn(2+) is required as a cofactor. Co(2+) serves as cofactor.

The catalysed reaction is N-succinyl-(2S,6S)-2,6-diaminopimelate + H2O = (2S,6S)-2,6-diaminopimelate + succinate. The protein operates within amino-acid biosynthesis; L-lysine biosynthesis via DAP pathway; LL-2,6-diaminopimelate from (S)-tetrahydrodipicolinate (succinylase route): step 3/3. Functionally, catalyzes the hydrolysis of N-succinyl-L,L-diaminopimelic acid (SDAP), forming succinate and LL-2,6-diaminopimelate (DAP), an intermediate involved in the bacterial biosynthesis of lysine and meso-diaminopimelic acid, an essential component of bacterial cell walls. The protein is Succinyl-diaminopimelate desuccinylase of Burkholderia cenocepacia (strain HI2424).